A 406-amino-acid chain; its full sequence is Arginine biosynthesis bifunctional protein ArgJ (406 aa).

The substrate site is built by T154, K180, T191, E278, N401, and T406. The active-site Nucleophile is T191.

The protein belongs to the ArgJ family. Heterotetramer of two alpha and two beta chains.

It is found in the cytoplasm. The enzyme catalyses N(2)-acetyl-L-ornithine + L-glutamate = N-acetyl-L-glutamate + L-ornithine. It catalyses the reaction L-glutamate + acetyl-CoA = N-acetyl-L-glutamate + CoA + H(+). The protein operates within amino-acid biosynthesis; L-arginine biosynthesis; L-ornithine and N-acetyl-L-glutamate from L-glutamate and N(2)-acetyl-L-ornithine (cyclic): step 1/1. It functions in the pathway amino-acid biosynthesis; L-arginine biosynthesis; N(2)-acetyl-L-ornithine from L-glutamate: step 1/4. Its function is as follows. Catalyzes two activities which are involved in the cyclic version of arginine biosynthesis: the synthesis of N-acetylglutamate from glutamate and acetyl-CoA as the acetyl donor, and of ornithine by transacetylation between N(2)-acetylornithine and glutamate. The protein is Arginine biosynthesis bifunctional protein ArgJ of Gloeobacter violaceus (strain ATCC 29082 / PCC 7421).